Reading from the N-terminus, the 178-residue chain is Large ribosomal subunit protein uL6 (178 aa).

Belongs to the universal ribosomal protein uL6 family. Part of the 50S ribosomal subunit.

Its function is as follows. This protein binds to the 23S rRNA, and is important in its secondary structure. It is located near the subunit interface in the base of the L7/L12 stalk, and near the tRNA binding site of the peptidyltransferase center. This chain is Large ribosomal subunit protein uL6, found in Lactococcus lactis subsp. cremoris (strain MG1363).